The primary structure comprises 334 residues: Holliday junction branch migration complex subunit RuvB (334 aa).

The tract at residues 4-186 is large ATPase domain (RuvB-L); that stretch reads ADRLIAPISN…FGIVQRLEYY (183 aa). Residues isoleucine 25, arginine 26, glycine 67, lysine 70, threonine 71, threonine 72, 133-135, arginine 176, tyrosine 186, and arginine 223 contribute to the ATP site; that span reads EDY. Residue threonine 71 coordinates Mg(2+). Residues 187-257 form a small ATPAse domain (RuvB-S) region; it reads KVADLQHIVQ…TADRALNMLD (71 aa). The segment at 260–334 is head domain (RuvB-H); it reads HQGFDYMDRK…RAYLHFGIEK (75 aa). Residues arginine 315 and arginine 320 each coordinate DNA.

The protein belongs to the RuvB family. Homohexamer. Forms an RuvA(8)-RuvB(12)-Holliday junction (HJ) complex. HJ DNA is sandwiched between 2 RuvA tetramers; dsDNA enters through RuvA and exits via RuvB. An RuvB hexamer assembles on each DNA strand where it exits the tetramer. Each RuvB hexamer is contacted by two RuvA subunits (via domain III) on 2 adjacent RuvB subunits; this complex drives branch migration. In the full resolvosome a probable DNA-RuvA(4)-RuvB(12)-RuvC(2) complex forms which resolves the HJ.

It is found in the cytoplasm. It catalyses the reaction ATP + H2O = ADP + phosphate + H(+). In terms of biological role, the RuvA-RuvB-RuvC complex processes Holliday junction (HJ) DNA during genetic recombination and DNA repair, while the RuvA-RuvB complex plays an important role in the rescue of blocked DNA replication forks via replication fork reversal (RFR). RuvA specifically binds to HJ cruciform DNA, conferring on it an open structure. The RuvB hexamer acts as an ATP-dependent pump, pulling dsDNA into and through the RuvAB complex. RuvB forms 2 homohexamers on either side of HJ DNA bound by 1 or 2 RuvA tetramers; 4 subunits per hexamer contact DNA at a time. Coordinated motions by a converter formed by DNA-disengaged RuvB subunits stimulates ATP hydrolysis and nucleotide exchange. Immobilization of the converter enables RuvB to convert the ATP-contained energy into a lever motion, pulling 2 nucleotides of DNA out of the RuvA tetramer per ATP hydrolyzed, thus driving DNA branch migration. The RuvB motors rotate together with the DNA substrate, which together with the progressing nucleotide cycle form the mechanistic basis for DNA recombination by continuous HJ branch migration. Branch migration allows RuvC to scan DNA until it finds its consensus sequence, where it cleaves and resolves cruciform DNA. The chain is Holliday junction branch migration complex subunit RuvB from Vibrio cholerae serotype O1 (strain ATCC 39541 / Classical Ogawa 395 / O395).